The following is a 573-amino-acid chain: Delta 8-(E)-sphingolipid desaturase (573 aa).

One can recognise a Cytochrome b5 heme-binding domain in the interval 2 to 77 (SRVLSRRDIA…FKIWKIGRID (76 aa)). The heme site is built by histidine 37 and histidine 60. Residues 228–248 (LFGISFYLLSLKWFAISAICL) traverse the membrane as a helical segment. Residues 260-264 (HDAGH) carry the Histidine box-1 motif. Residues 273–293 (VDNIIGMTVASWIGGLSLGWW) form a helical membrane-spanning segment. Positions 297-301 (HNVHH) match the Histidine box-2 motif. The next 3 membrane-spanning stretches (helical) occupy residues 353–372 (YLYY…LSWM), 393–413 (LAGL…KQMP), and 422–442 (VMIS…SHFA). Positions 481–485 (QVIHH) match the Histidine box-3 motif.

The protein belongs to the fatty acid desaturase type 1 family.

It is found in the membrane. The enzyme catalyses an N-acylsphing-4-enine + 2 Fe(II)-[cytochrome b5] + O2 + 2 H(+) = a (4E,8E)-4-sphinga-4,8-dienine ceramide + 2 Fe(III)-[cytochrome b5] + 2 H2O. Its pathway is lipid metabolism; sphingolipid metabolism. Functionally, delta(8)-fatty-acid desaturase which introduces a double bond at the 8-position in the long-chain base (LCB) of ceramides. Required for the formation of the di-unsaturated sphingoid base (E,E)-sphinga-4,8-dienine during glucosylceramide (GluCer) biosynthesis. The polypeptide is Delta 8-(E)-sphingolipid desaturase (Kluyveromyces lactis (strain ATCC 8585 / CBS 2359 / DSM 70799 / NBRC 1267 / NRRL Y-1140 / WM37) (Yeast)).